Reading from the N-terminus, the 160-residue chain is Serine-protein kinase RsbW (160 aa).

Belongs to the anti-sigma-factor family.

It catalyses the reaction L-seryl-[protein] + ATP = O-phospho-L-seryl-[protein] + ADP + H(+). The catalysed reaction is L-threonyl-[protein] + ATP = O-phospho-L-threonyl-[protein] + ADP + H(+). Functionally, negative regulator of sigma-B activity. Phosphorylates and inactivates its specific antagonist protein, RsbV. Upon phosphorylation of RsbV, RsbW is released and binds to sigma-B, thereby blocking its ability to form an RNA polymerase holoenzyme (E-sigma-B). The sequence is that of Serine-protein kinase RsbW from Bacillus cereus (strain ZK / E33L).